The chain runs to 194 residues: PBAN-type neuropeptides (194 aa).

Positions 1–23 (MFNQTQLFVFLAVFTTSSVLGNN) are cleaved as a signal peptide. Leucine 47 bears the Leucine amide mark. A propeptide spanning residues 51–94 (SLRISTEDNRQAFFKLLEAADALKYYYDQLPYEMQADEPETRVT) is cleaved from the precursor. Leucine amide occurs at positions 103, 123, 159, and 169. A propeptide spanning residues 172-194 (ELSYDMMPNKIRVVRSTNKTRST) is cleaved from the precursor.

The protein belongs to the pyrokinin family. Expressed in the subesophageal ganglions. Not found in corpora cardiaca, corpora allata and thoracic ganglia.

Its subcellular location is the secreted. Functionally, a hormone that controls sex pheromone production in females and pheromone responsiveness in male. Also mediates visceral muscle contractile activity (myotropic activity). This is PBAN-type neuropeptides from Helicoverpa zea (Corn earworm moth).